The primary structure comprises 340 residues: UDP-3-O-acylglucosamine N-acyltransferase (340 aa).

Residue His238 is the Proton acceptor of the active site.

Belongs to the transferase hexapeptide repeat family. LpxD subfamily. In terms of assembly, homotrimer.

The catalysed reaction is a UDP-3-O-[(3R)-3-hydroxyacyl]-alpha-D-glucosamine + a (3R)-hydroxyacyl-[ACP] = a UDP-2-N,3-O-bis[(3R)-3-hydroxyacyl]-alpha-D-glucosamine + holo-[ACP] + H(+). It participates in bacterial outer membrane biogenesis; LPS lipid A biosynthesis. In terms of biological role, catalyzes the N-acylation of UDP-3-O-acylglucosamine using 3-hydroxyacyl-ACP as the acyl donor. Is involved in the biosynthesis of lipid A, a phosphorylated glycolipid that anchors the lipopolysaccharide to the outer membrane of the cell. The protein is UDP-3-O-acylglucosamine N-acyltransferase of Psychromonas ingrahamii (strain DSM 17664 / CCUG 51855 / 37).